Here is a 200-residue protein sequence, read N- to C-terminus: NAD(P)H dehydrogenase (quinone) (200 aa).

Residues 4 to 191 (VLVLYYSSYG…DIARYQGKRV (188 aa)) enclose the Flavodoxin-like domain. Residues 10–15 (SSYGHV) and 79–81 (TRF) each bind FMN. Residue Tyr-12 coordinates NAD(+). Trp-99 serves as a coordination point for substrate. Residues 114 to 120 (STGTQHG) and His-135 contribute to the FMN site.

Belongs to the WrbA family. The cofactor is FMN.

The enzyme catalyses a quinone + NADH + H(+) = a quinol + NAD(+). It catalyses the reaction a quinone + NADPH + H(+) = a quinol + NADP(+). This chain is NAD(P)H dehydrogenase (quinone), found in Burkholderia lata (strain ATCC 17760 / DSM 23089 / LMG 22485 / NCIMB 9086 / R18194 / 383).